Consider the following 322-residue polypeptide: Elongation factor P--(R)-beta-lysine ligase (322 aa).

Substrate is bound at residue 72–74 (SPE). Residues 96 to 98 (RNN) and Asn106 contribute to the ATP site. Tyr115 provides a ligand contact to substrate. An ATP-binding site is contributed by 241 to 242 (EL). Glu248 serves as a coordination point for substrate. Gly297 serves as a coordination point for ATP.

The protein belongs to the class-II aminoacyl-tRNA synthetase family. EpmA subfamily. Homodimer.

It carries out the reaction D-beta-lysine + L-lysyl-[protein] + ATP = N(6)-((3R)-3,6-diaminohexanoyl)-L-lysyl-[protein] + AMP + diphosphate + H(+). With EpmB is involved in the beta-lysylation step of the post-translational modification of translation elongation factor P (EF-P). Catalyzes the ATP-dependent activation of (R)-beta-lysine produced by EpmB, forming a lysyl-adenylate, from which the beta-lysyl moiety is then transferred to the epsilon-amino group of a conserved specific lysine residue in EF-P. This chain is Elongation factor P--(R)-beta-lysine ligase, found in Buchnera aphidicola subsp. Baizongia pistaciae (strain Bp).